We begin with the raw amino-acid sequence, 167 residues long: Ion-translocating oxidoreductase complex subunit B (167 aa).

The interval 1-22 (MITLIIFSFLSFLLGIILSFTA) is hydrophobic. The 4Fe-4S domain maps to 28 to 87 (QEDPIVAIVNELLPQSQCAQCGYSGCYPYAKAIVENSEKINKCIPGGTDLISAISSVLSI). Residues C45, C48, C53, C70, C113, C116, C119, C123, C143, C146, C149, and C153 each coordinate [4Fe-4S] cluster. 4Fe-4S ferredoxin-type domains lie at 104–133 (NTVL…GAPN) and 134–163 (FIHT…IKKE).

The protein belongs to the 4Fe4S bacterial-type ferredoxin family. RnfB subfamily. The complex is composed of six subunits: RnfA, RnfB, RnfC, RnfD, RnfE and RnfG. [4Fe-4S] cluster serves as cofactor.

It is found in the cell inner membrane. In terms of biological role, part of a membrane-bound complex that couples electron transfer with translocation of ions across the membrane. The chain is Ion-translocating oxidoreductase complex subunit B from Buchnera aphidicola subsp. Acyrthosiphon pisum (strain 5A).